Consider the following 109-residue polypeptide: ATP-dependent Clp protease adapter protein ClpS 2 (109 aa).

A disordered region spans residues 1-24 (MAGDGGRSGPSTPSTSVITKTKPR).

This sequence belongs to the ClpS family. As to quaternary structure, binds to the N-terminal domain of the chaperone ClpA.

Its function is as follows. Involved in the modulation of the specificity of the ClpAP-mediated ATP-dependent protein degradation. This Rhodopseudomonas palustris (strain ATCC BAA-98 / CGA009) protein is ATP-dependent Clp protease adapter protein ClpS 2.